Reading from the N-terminus, the 697-residue chain is uncharacterized protein (697 aa).

14 consecutive transmembrane segments (helical) span residues 65–85 (PVRNFIEEGCDGVTDLYVGIY), 106–126 (CTFRTNNVKLGYLIVDELHNF), 131–151 (YRQSQFGGITNLDFDAFEKAI), 163–183 (DAALQRIGLTGLAKKSMDINE), 194–214 (LSSYPTRMFNLIKEKSKVPLG), 227–247 (TSATTTASINVRTSATTTASI), 286–306 (STNATTTESTNASAKEDANKD), 316–336 (PVTDINKEPYKRKGSQMVLLE), 361–381 (SDEIKHLFLYGIDIYFCPEGV), 394–414 (MFELCVCWAGQKVSYRRMAWE), 419–439 (ERMLRNDEEYKEYLEDIEPYH), 450–470 (SVKRREIYSQIQRNYAWYLAI), 487–507 (QGSQVFRMSGRQIKELYYKVW), and 558–578 (TSAGLQGPQYVKLQFSRHHRQ). Residues 246–321 (SINVRTSATT…NRFHPVTDIN (76 aa)) form a disordered region. The span at 251–298 (TSATTTESTNSNTNATTTESTNSSTNATTTASTNSSTNATTTESTNAS) shows a compositional bias: low complexity. Residues 299–321 (AKEDANKDGNAEDNRFHPVTDIN) show a composition bias toward basic and acidic residues.

Its subcellular location is the membrane. This is an uncharacterized protein from Saccharomyces cerevisiae (strain ATCC 204508 / S288c) (Baker's yeast).